A 456-amino-acid chain; its full sequence is Dothistromin biosynthesis regulatory protein aflJ (456 aa).

The HTH iclR-type domain maps to 74 to 143 (LARENQLLAC…PKPGYVAHSG (70 aa)). Positions 104–123 (YSDVADLACVPVDQLRRIAR) form a DNA-binding region, H-T-H motif. The span at 290-300 (KLHNGLSTPPE) shows a compositional bias: polar residues. Residues 290 to 314 (KLHNGLSTPPESDTGPAARAAKASE) form a disordered region.

The protein resides in the nucleus. In terms of biological role, transcription coactivator involved in regulation of the dothistromin biosynthesis gene cluster with aflR. The polypeptide is Dothistromin biosynthesis regulatory protein aflJ (Dothistroma septosporum (strain NZE10 / CBS 128990) (Red band needle blight fungus)).